A 492-amino-acid polypeptide reads, in one-letter code: Cysteine--tRNA ligase (492 aa).

Zn(2+) is bound at residue Cys-35. The 'HIGH' region motif lies at 37 to 47 (PTVYSNVHLGN). Zn(2+) is bound by residues Cys-230, His-255, and Glu-259. The 'KMSKS' region motif lies at 287–291 (KMAKS). Lys-290 provides a ligand contact to ATP.

It belongs to the class-I aminoacyl-tRNA synthetase family. Monomer. Requires Zn(2+) as cofactor.

It localises to the cytoplasm. It carries out the reaction tRNA(Cys) + L-cysteine + ATP = L-cysteinyl-tRNA(Cys) + AMP + diphosphate. This chain is Cysteine--tRNA ligase, found in Flavobacterium johnsoniae (strain ATCC 17061 / DSM 2064 / JCM 8514 / BCRC 14874 / CCUG 350202 / NBRC 14942 / NCIMB 11054 / UW101) (Cytophaga johnsonae).